We begin with the raw amino-acid sequence, 508 residues long: Photosystem II CP47 reaction center protein (508 aa).

A run of 6 helical transmembrane segments spans residues 21 to 36 (SVHIMHTALVAGWAGS), 101 to 115 (IMFSGLMFLAAIWHW), 140 to 156 (GIHLFLSGVACFGFGAF), 203 to 218 (IAAGILGILAGLFHLS), 237 to 252 (VLSSSIAAVFFAAFIV), and 457 to 472 (TFALLFFSGHIWHGAR).

This sequence belongs to the PsbB/PsbC family. PsbB subfamily. As to quaternary structure, PSII is composed of 1 copy each of membrane proteins PsbA, PsbB, PsbC, PsbD, PsbE, PsbF, PsbH, PsbI, PsbJ, PsbK, PsbL, PsbM, PsbT, PsbX, PsbY, PsbZ, Psb30/Ycf12, at least 3 peripheral proteins of the oxygen-evolving complex and a large number of cofactors. It forms dimeric complexes. Binds multiple chlorophylls. PSII binds additional chlorophylls, carotenoids and specific lipids. is required as a cofactor.

Its subcellular location is the plastid. It localises to the chloroplast thylakoid membrane. One of the components of the core complex of photosystem II (PSII). It binds chlorophyll and helps catalyze the primary light-induced photochemical processes of PSII. PSII is a light-driven water:plastoquinone oxidoreductase, using light energy to abstract electrons from H(2)O, generating O(2) and a proton gradient subsequently used for ATP formation. This Pinus koraiensis (Korean pine) protein is Photosystem II CP47 reaction center protein.